We begin with the raw amino-acid sequence, 83 residues long: Putative snRNP Sm-like protein (83 aa).

Residues 9–81 enclose the Sm domain; that stretch reads KPMDVLKSAL…VIFVSPSKGD (73 aa).

It belongs to the snRNP Sm proteins family.

The chain is Putative snRNP Sm-like protein from Thermoplasma acidophilum (strain ATCC 25905 / DSM 1728 / JCM 9062 / NBRC 15155 / AMRC-C165).